Reading from the N-terminus, the 146-residue chain is Small ribosomal subunit protein eS17 (146 aa).

The protein belongs to the eukaryotic ribosomal protein eS17 family. As to quaternary structure, component of the small ribosomal subunit (SSU). Mature N.crassa ribosomes consist of a small (40S) and a large (60S) subunit. The 40S small subunit contains 1 molecule of ribosomal RNA (18S rRNA) and at least 32 different proteins. The large 60S subunit contains 3 rRNA molecules (26S, 5.8S and 5S rRNA) and at least 42 different proteins.

The protein localises to the cytoplasm. Functionally, component of the ribosome, a large ribonucleoprotein complex responsible for the synthesis of proteins in the cell. The small ribosomal subunit (SSU) binds messenger RNAs (mRNAs) and translates the encoded message by selecting cognate aminoacyl-transfer RNA (tRNA) molecules. The large subunit (LSU) contains the ribosomal catalytic site termed the peptidyl transferase center (PTC), which catalyzes the formation of peptide bonds, thereby polymerizing the amino acids delivered by tRNAs into a polypeptide chain. The nascent polypeptides leave the ribosome through a tunnel in the LSU and interact with protein factors that function in enzymatic processing, targeting, and the membrane insertion of nascent chains at the exit of the ribosomal tunnel. This is Small ribosomal subunit protein eS17 (rps-17) from Neurospora crassa (strain ATCC 24698 / 74-OR23-1A / CBS 708.71 / DSM 1257 / FGSC 987).